Here is a 359-residue protein sequence, read N- to C-terminus: Spore germination protein GerQC (359 aa).

The N-terminal stretch at 1 to 16 (MKRWILFLILSVFLIG) is a signal peptide. Cysteine 17 is lipidated: N-palmitoyl cysteine. A lipid anchor (S-diacylglycerol cysteine) is attached at cysteine 17.

The protein belongs to the GerABKC lipoprotein family.

It is found in the membrane. In terms of biological role, required for the germination response to inosine. Has no role in L-alanine germination. The polypeptide is Spore germination protein GerQC (gerQC) (Bacillus cereus).